The following is a 228-amino-acid chain: Prolactin-2B1 (228 aa).

The first 31 residues, 1-31 (MLLSLTQMLSSRASSRLFLVSYLLLWENVVS), serve as a signal peptide directing secretion. 2 cysteine pairs are disulfide-bonded: C89/C194 and C203/C228.

This sequence belongs to the somatotropin/prolactin family. Expressed specifically in placenta. Expressed at high levels in trophoblast cells from both junctional and labyrinth zones of the chorioallantoic placenta the last week of gestation.

Its subcellular location is the secreted. The protein is Prolactin-2B1 (Prl2b1) of Mus musculus (Mouse).